Here is a 673-residue protein sequence, read N- to C-terminus: Zinc finger and BTB domain-containing protein 16 (673 aa).

Positions 34–96 (CDVVIMVDSQ…AYTATLQAKA (63 aa)) constitute a BTB domain. Residues S76, S184, and S197 each carry the phosphoserine; by PDPK1 modification. Residues 200 to 300 (KAAVDSLMTI…SARELHYGRE (101 aa)) are interaction with RUNX1T1. 2 disordered regions span residues 215–236 (QGTL…GRHP) and 249–332 (DEVP…KHLG). Position 256 is a phosphoserine; by PDPK1 (S256). T282 carries the post-translational modification Phosphothreonine; by PDPK1. 2 stretches are compositionally biased toward basic and acidic residues: residues 293–302 (RELHYGREES) and 319–331 (RPEH…EKHL). 8 C2H2-type zinc fingers span residues 404–426 (EQCS…RKLH), 432–454 (YGCE…LLAH), 461–483 (FVCD…RQTH), 490–512 (VFCL…MEVH), 518–540 (YICS…LRSH), 546–568 (YECE…KRIH), 574–596 (YECN…YRVH), and 602–624 (FECK…LRTH). The residue at position 628 (S628) is a Phosphoserine; by PDPK1. The C2H2-type 9 zinc finger occupies 630–652 (YQCTICTEYCPSLSSMQKHMKGH).

The protein belongs to the krueppel C2H2-type zinc-finger protein family. As to quaternary structure, binds EPN1. Interacts with ZBTB32 and CUL3. Interacts with ATP7B. Interacts with transcriptional corepressor RUNX1T1 (via its N-terminus); the interaction increases the transcription repression activity of ZBTB16. Interacts (via C2H2-type zinc finger domains 1 and 2) with RNF112. As to expression, within the hematopoietic system, PLZF is expressed in bone marrow, early myeloid cell lines and peripheral blood mononuclear cells. Also expressed in the ovary, and at lower levels, in the kidney and lung.

The protein resides in the nucleus. Its subcellular location is the nuclear body. It functions in the pathway protein modification; protein ubiquitination. Acts as a transcriptional repressor. Transcriptional repression may be mediated through recruitment of histone deacetylases to target promoters. May play a role in myeloid maturation and in the development and/or maintenance of other differentiated tissues. Probable substrate-recognition component of an E3 ubiquitin-protein ligase complex which mediates the ubiquitination and subsequent proteasomal degradation of target proteins. The chain is Zinc finger and BTB domain-containing protein 16 (ZBTB16) from Homo sapiens (Human).